Here is a 263-residue protein sequence, read N- to C-terminus: Chromosomal replication initiator protein DnaA (263 aa).

Residue glutamate 1 is a region of interest, domain I, interacts with DnaA modulators. Position 1 (glutamate 1) is a region of interest, domain II. A domain III, AAA+ region region spans residues 1-179 (ESGMGKTHLL…GSVSRLNFWS (179 aa)). ATP-binding residues include glycine 3, glycine 5, lysine 6, and threonine 7. The segment at 180–263 (QQNPEEKIIT…HTLAQIGEEF (84 aa)) is domain IV, binds dsDNA.

It belongs to the DnaA family. As to quaternary structure, oligomerizes as a right-handed, spiral filament on DNA at oriC.

The protein localises to the cytoplasm. In terms of biological role, plays an essential role in the initiation and regulation of chromosomal replication. ATP-DnaA binds to the origin of replication (oriC) to initiate formation of the DNA replication initiation complex once per cell cycle. Binds the DnaA box (a 9 base pair repeat at the origin) and separates the double-stranded (ds)DNA. Forms a right-handed helical filament on oriC DNA; dsDNA binds to the exterior of the filament while single-stranded (ss)DNA is stabiized in the filament's interior. The ATP-DnaA-oriC complex binds and stabilizes one strand of the AT-rich DNA unwinding element (DUE), permitting loading of DNA polymerase. After initiation quickly degrades to an ADP-DnaA complex that is not apt for DNA replication. Binds acidic phospholipids. This is Chromosomal replication initiator protein DnaA from Mycoplasma mycoides.